The sequence spans 1217 residues: ATP-dependent helicase/nuclease subunit A (1217 aa).

One can recognise a UvrD-like helicase ATP-binding domain in the interval 10-475; it reads VIWTDAQWQS…MDLSQNFRSR (466 aa). 31 to 38 lines the ATP pocket; it reads AAAGSGKT. Positions 491-786 constitute a UvrD-like helicase C-terminal domain; sequence DEQVGEVNYD…RMMTIHSSKG (296 aa).

Belongs to the helicase family. AddA subfamily. Heterodimer of AddA and AddB/RexB. Requires Mg(2+) as cofactor.

It carries out the reaction Couples ATP hydrolysis with the unwinding of duplex DNA by translocating in the 3'-5' direction.. The catalysed reaction is ATP + H2O = ADP + phosphate + H(+). Functionally, the heterodimer acts as both an ATP-dependent DNA helicase and an ATP-dependent, dual-direction single-stranded exonuclease. Recognizes the chi site generating a DNA molecule suitable for the initiation of homologous recombination. The AddA nuclease domain is required for chi fragment generation; this subunit has the helicase and 3' -&gt; 5' nuclease activities. The chain is ATP-dependent helicase/nuclease subunit A from Staphylococcus aureus (strain bovine RF122 / ET3-1).